The primary structure comprises 1637 residues: Surface protein (1637 aa).

The first 48 residues, 1–48 (MNKNSKKKLDFLPNKLNKYSIRRFTVGTASILVGATLIFGVANDQAEA), serve as a signal peptide directing secretion. Disordered regions lie at residues 49–305 (AENN…RTQV), 689–719 (VQKGEDGEKTTTTPTKVDPDTGDVVERGEPT), and 739–1611 (PQGH…NGTL). Over residues 56–65 (KQDDSSDASK) the composition is skewed to basic and acidic residues. Polar residues predominate over residues 69 to 83 (NVQTIEQSSANSNES). Composition is skewed to basic and acidic residues over residues 90 to 106 (DVTKDTTEQASTEEKAN), 127 to 180 (EAPK…KATT), and 188 to 264 (ETSK…KVET). Positions 289 to 298 (AKSNSNAQPS) are enriched in polar residues. G5 domains lie at 654–737 (QADL…TPEE), 783–865 (HGPK…GGEE), 911–993 (HGPK…GGEE), 1039–1121 (HGPK…GGEE), and 1167–1250 (HGPK…APEI). Over residues 779–817 (DVTKHGPKAGEPEVTKEEIPFEKKREFNPDLKPGEEKVT) the composition is skewed to basic and acidic residues. Low complexity predominate over residues 818 to 832 (QEGQTGEKTTTTPTT). Over residues 907 to 945 (DVTKHGPKAGEPEVTKEEIPFEKKREFNPDLKPGEEKVT) the composition is skewed to basic and acidic residues. Positions 946-960 (QEGQTGEKTTTTPTT) are enriched in low complexity. Basic and acidic residues predominate over residues 1035–1073 (DVTKHGPKAGEPEVTKEEIPFEKKREFNPDLKPGEEKVT). The segment covering 1074–1088 (QEGQTGEKTTTTPTT) has biased composition (low complexity). The span at 1163 to 1189 (DVTKHGPKAGEPEVTKEEIPYETKRVL) shows a compositional bias: basic and acidic residues. Acidic residues-rich tracts occupy residues 1282 to 1291 (TGEIIEEPQD) and 1302 to 1580 (SDAD…DSDS). A run of 141 repeats spans residues 1301–1302 (DS), 1303–1304 (DA), 1305–1306 (DS), 1307–1308 (DS), 1309–1310 (DA), 1311–1312 (DS), 1313–1314 (DS), 1315–1316 (DA), 1317–1318 (DS), 1319–1320 (DS), 1321–1322 (DA), 1323–1324 (DS), 1325–1326 (DS), 1327–1328 (DA), 1329–1330 (DS), 1331–1332 (DS), 1333–1334 (DS), 1335–1336 (DS), 1337–1338 (DS), 1339–1340 (DS), 1341–1342 (DS), 1343–1344 (DS), 1345–1346 (DA), 1347–1348 (DS), 1349–1350 (DS), 1351–1352 (DS), 1353–1354 (DS), 1355–1356 (DS), 1357–1358 (DA), 1359–1360 (DS), 1361–1362 (DS), 1363–1364 (DA), 1365–1366 (DS), 1367–1368 (DS), 1369–1370 (DA), 1371–1372 (DS), 1373–1374 (DS), 1375–1376 (DS), 1377–1378 (DA), 1379–1380 (DS), 1381–1382 (DS), 1383–1384 (DS), 1385–1386 (DA), 1387–1388 (DS), 1389–1390 (DS), 1391–1392 (DS), 1393–1394 (DS), 1395–1396 (DS), 1397–1398 (DA), 1399–1400 (DS), 1401–1402 (DS), 1403–1404 (DS), 1405–1406 (DS), 1407–1408 (DS), 1409–1410 (DA), 1411–1412 (DS), 1413–1414 (DS), 1415–1416 (DA), 1417–1418 (DS), 1419–1420 (DS), 1421–1422 (DS), 1423–1424 (DS), 1425–1426 (DS), 1427–1428 (DA), 1429–1430 (DS), 1431–1432 (DS), 1433–1434 (DS), 1435–1436 (DS), 1437–1438 (DS), 1439–1440 (DA), 1441–1442 (DS), 1443–1444 (DS), 1445–1446 (DA), 1447–1448 (DS), 1449–1450 (DS), 1451–1452 (DA), 1453–1454 (DS), 1455–1456 (DS), 1457–1458 (DA), 1459–1460 (DS), 1461–1462 (DS), 1463–1464 (DS), 1465–1466 (DS), 1467–1468 (DS), 1469–1470 (DA), 1471–1472 (DS), 1473–1474 (DS), 1475–1476 (DA), 1477–1478 (DS), 1479–1480 (DS), 1481–1482 (DA), 1483–1484 (DS), 1485–1486 (DS), 1487–1488 (DA), 1489–1490 (DS), 1491–1492 (DS), 1493–1494 (DS), 1495–1496 (DS), 1497–1498 (DS), 1499–1500 (DA), 1501–1502 (DS), 1503–1504 (DS), 1505–1506 (DS), 1507–1508 (DS), 1509–1510 (DS), 1511–1512 (DS), 1513–1514 (DA), 1515–1516 (DS), 1517–1518 (DS), 1519–1520 (DA), 1521–1522 (DS), 1523–1524 (DS), 1525–1526 (DS), 1527–1528 (DA), 1529–1530 (DS), 1531–1532 (DS), 1533–1534 (DA), 1535–1536 (DS), 1537–1538 (DS), 1539–1540 (DA), 1541–1542 (DG), 1543–1544 (DS), 1545–1546 (DA), 1547–1548 (DS), 1549–1550 (DS), 1551–1552 (DA), 1553–1554 (DS), 1555–1556 (DS), 1557–1558 (DS), 1559–1560 (DS), 1561–1562 (DS), 1563–1564 (DS), 1565–1566 (DS), 1567–1568 (DS), 1569–1570 (DA), 1571–1572 (DS), 1573–1574 (DS), 1575–1576 (DS), 1577–1578 (DS), 1579–1580 (DS), and 1581–1582 (DA). A 141 X 2 AA tandem repeats of D-[SAG] region spans residues 1301 to 1582 (DSDADSDSDA…DSDSDSDSDA (282 aa)). Residues 1581 to 1599 (DADRDHNDKTDKPNNKELP) show a composition bias toward basic and acidic residues. The short motif at 1598–1602 (LPDTG) is the LPXTG sorting signal element. Thr-1601 is modified (pentaglycyl murein peptidoglycan amidated threonine). A propeptide spans 1602–1637 (GNDAQNNGTLFGSLFAALGGLFLVGRRRKNKNNEEK) (removed by sortase).

It is found in the secreted. Its subcellular location is the cell wall. Its function is as follows. Could have a role in preventing adhesion at some stages during an infection. This Staphylococcus aureus protein is Surface protein (pls).